Here is a 176-residue protein sequence, read N- to C-terminus: MPDLQAGQRPAFVAMLPWLVLAAAVMGLDQLTKQVVLATMQYGEVIPVTGFFDLVLVFNRGAAFSFLAEHSGWQRWFFTGLAVVICGWLLALMHQHREERLLPAAFALIIGGAIGNVVDRLLHGAVVDFLYFHAGRYGWPAFNLADSAITLGVGLMLWAQLRAGKHKPEAGPERPS.

4 consecutive transmembrane segments (helical) span residues 11–31, 38–58, 76–96, and 101–121; these read AFVA…LDQL, ATMQ…VLVF, WFFT…MHQH, and LLPA…VDRL. Active-site residues include D128 and D146. Residues 139 to 159 form a helical membrane-spanning segment; that stretch reads WPAFNLADSAITLGVGLMLWA.

Belongs to the peptidase A8 family.

The protein resides in the cell inner membrane. The catalysed reaction is Release of signal peptides from bacterial membrane prolipoproteins. Hydrolyzes -Xaa-Yaa-Zaa-|-(S,diacylglyceryl)Cys-, in which Xaa is hydrophobic (preferably Leu), and Yaa (Ala or Ser) and Zaa (Gly or Ala) have small, neutral side chains.. Its pathway is protein modification; lipoprotein biosynthesis (signal peptide cleavage). In terms of biological role, this protein specifically catalyzes the removal of signal peptides from prolipoproteins. This Azoarcus sp. (strain BH72) protein is Lipoprotein signal peptidase.